Here is a 252-residue protein sequence, read N- to C-terminus: Probable phosphatase SO_1652 (252 aa).

Zn(2+)-binding residues include histidine 8, histidine 10, histidine 16, histidine 41, glutamate 74, histidine 102, histidine 132, aspartate 193, and histidine 195.

This sequence belongs to the PHP family. Requires Zn(2+) as cofactor.

In Shewanella oneidensis (strain ATCC 700550 / JCM 31522 / CIP 106686 / LMG 19005 / NCIMB 14063 / MR-1), this protein is Probable phosphatase SO_1652.